The following is a 302-amino-acid chain: Pseudouridine-5'-phosphate glycosidase (302 aa).

Glu-25 serves as the catalytic Proton donor. Positions 86 and 106 each coordinate substrate. Asp-138 is a Mn(2+) binding site. Position 140–142 (Ser-140–Asp-142) interacts with substrate. Lys-159 (nucleophile) is an active-site residue.

This sequence belongs to the pseudouridine-5'-phosphate glycosidase family. In terms of assembly, homotrimer. The cofactor is Mn(2+).

It catalyses the reaction D-ribose 5-phosphate + uracil = psi-UMP + H2O. Its function is as follows. Catalyzes the reversible cleavage of pseudouridine 5'-phosphate (PsiMP) to ribose 5-phosphate and uracil. Functions biologically in the cleavage direction, as part of a pseudouridine degradation pathway. The sequence is that of Pseudouridine-5'-phosphate glycosidase from Jannaschia sp. (strain CCS1).